A 465-amino-acid polypeptide reads, in one-letter code: MDLRAGRFDGQMTDDAAQFSSSIEFDKRIFKSDIKCNRAHTTMLIEEGIIPKESGKKILKALDKLEKEGIGALNLDPSFEDIHMALEDYVTKEIGDEAGFMHTAKSRNDQVCTDIRLTLKEEIENTISNIKSFIKTIVEMAKENTHTLFIAYTHLQHAQPTTFAHHLMAYANELRRDCERLIDTYKRVDMNPLGSAALTTTGFPINRERTTELLGFSKVMDNSIDGVSSRDFAAEAIFDYAMLSTTLGKISDEIVIWSSYEFRMVECSNQYSSTSSIMPQKKNPDIAELSRGKSTIAYGELMTVLSMIKGIPHSYNRDLQEVTPHLWNAIDNTNDILRIVHGMLSTLTINKDRTEELAGANFATATELADVMVREKNLPFRTAHRIVGRVVSEAIDDNITTHDIDNDYVNRVSVEVMGKPINLGEDLVKQALNPLRNVKSRTVIGGCAPEAVNDAIEKMEIFLNE.

It belongs to the lyase 1 family. Argininosuccinate lyase subfamily.

The protein resides in the cytoplasm. The enzyme catalyses 2-(N(omega)-L-arginino)succinate = fumarate + L-arginine. It functions in the pathway amino-acid biosynthesis; L-arginine biosynthesis; L-arginine from L-ornithine and carbamoyl phosphate: step 3/3. This is Argininosuccinate lyase from Methanosphaera stadtmanae (strain ATCC 43021 / DSM 3091 / JCM 11832 / MCB-3).